The following is a 908-amino-acid chain: MSDDEAFDIAGSLALKDEDDYSDSSSNEGEDFQDEIIPSDDEKEPSPPPKKKSKPNPQAFPSLELSDNEGNNDDDDDDDSKINSYFINNNPTAKKAKAGSFASFGLTKFILANIAKKGYKQPTPIQRKTIPLIMEGRDVVGMARTGSGKTAAFVLPLIERLKSRQPGGVRAVILSPSRELALQTYKQVKEFSHGTNLQSIVLIGGDSLEEDFSKMMTKPDIIVCTPGRFLHLKVEMQYDLMTVQYIVFDEADRLFEMGFAEQLNELLASLPSNRQSLLFSATLPRSLVDFAKAGLTNPVLVRLDAESKISDQLQMAYFTTKKNEREANLLYILQEVIKMPLGSEEQIKKLKDMDKRKIDSDSEDDDDDEERKKGKKRYKFKKERLPPANRLPSPHSTIVFVPTKHHVEYVTKLLRDAGYLVSYIYGTLDQHARKNQLYQFRVGLTNVLVVTDVAARGIDIPVLANVINFTLPASSKIFIHRVGRTARAGNKGWAYSIVNEKELPYLLDLELFLGKKILLTSMHEAKVEMLKKSSTGTFIPPVVNYTERLVLGSVPRVDLETFQELYENLLRNNYEIKVLKDVAAKGEKLYHRTRQPASQESLKRSKEIIESSWDDQHLLFGENLEKQKDAFLAKLQDRNSKQTVFELKGSDESLVEFMNRRRRQLAPIQRKAKERKELLAKERLAGLTHGIEDEILRADGENGYGVDEDELQEAFEDADKKKSFRDPQFFLSHYAPASVIQDQQLSLSTSFANEAQAATFDLDNDDKIQTNKQVMRWDKKKGKYINSKSTDKKYIISENGTKIPASFRSGKFDEWRKQRNLKPTSTVEDDSNKRFKHKQQRAPKLPDKFRDDYHKQKKKVEKAIESGVNVKGFHTPQQEIKSTEQIRKARLLKEKRKAKNARPSKKRK.

The interval 1–84 is disordered; it reads MSDDEAFDIA…DDDDDSKINS (84 aa). 2 stretches are compositionally biased toward acidic residues: residues 17-43 and 66-79; these read DEDDYSDSSSNEGEDFQDEIIPSDDEK and SDNEGNNDDDDDDD. A Q motif motif is present at residues 99-127; the sequence is GSFASFGLTKFILANIAKKGYKQPTPIQR. The Helicase ATP-binding domain occupies 130-301; sequence IPLIMEGRDV…KAGLTNPVLV (172 aa). ATP is bound at residue 143–150; the sequence is ARTGSGKT. Residues 249-252 carry the DEAD box motif; that stretch reads DEAD. Disordered stretches follow at residues 352-389 and 821-885; these read DMDKRKIDSDSEDDDDDEERKKGKKRYKFKKERLPPAN and LKPT…STEQ. Residues 373 to 382 show a composition bias toward basic residues; that stretch reads KGKKRYKFKK. One can recognise a Helicase C-terminal domain in the interval 373–533; that stretch reads KGKKRYKFKK…EAKVEMLKKS (161 aa). Basic and acidic residues predominate over residues 844 to 854; it reads KLPDKFRDDYH.

It belongs to the DEAD box helicase family. DDX54/DBP10 subfamily.

Its subcellular location is the nucleus. The protein resides in the nucleolus. It catalyses the reaction ATP + H2O = ADP + phosphate + H(+). In terms of biological role, ATP-binding RNA helicase involved in the biogenesis of 60S ribosomal subunits and is required for the normal formation of 25S and 5.8S rRNAs. This Candida albicans (strain SC5314 / ATCC MYA-2876) (Yeast) protein is ATP-dependent RNA helicase DBP10 (DBP10).